We begin with the raw amino-acid sequence, 61 residues long: Beta-defensin 13 (61 aa).

Residues 1–21 (MRLLYLLFAAVMLLFLQAVPA) form the signal peptide. The a 1,2-diacyl-sn-glycero-3-phosphate site is built by Ser-24, Arg-40, His-44, Asn-51, Asn-53, Gly-54, His-58, and Lys-61. 3 disulfide bridges follow: Cys-31–Cys-59, Cys-38–Cys-52, and Cys-42–Cys-60.

It belongs to the beta-defensin family. In terms of assembly, monomeric. Forms multimeric, probably including tetrameric, complexes in the presence of phospholipid phosphatidic acid.

Its subcellular location is the secreted. Its function is as follows. Exhibits antimicrobial activity against fungi. Antimicrobial activity in a pH-dependent manner against the yeast C.albicans; activity is salt tolerant and retains antifungal activity in NaCl concentrations of 100mM. Permeabilizes C.albicans cell membranes via targeting plasma membrane phospholipid phosphatidic acid. This is Beta-defensin 13 from Crocodylus porosus (Saltwater crocodile).